The primary structure comprises 345 residues: PI-PLC X domain-containing protein 1 (345 aa).

In terms of domain architecture, PI-PLC X-box spans 52-228; the sequence is QLWDVPLHHL…QVIVSYEDEA (177 aa).

Expressed at highest levels in brain and kidney. Also detected in stomach, thymus and skeletal muscle.

It localises to the cytoplasm. In Mus musculus (Mouse), this protein is PI-PLC X domain-containing protein 1 (Plcxd1).